We begin with the raw amino-acid sequence, 391 residues long: MARVGVLLLNLGGPERIKDVGPFLYNLFSDPEIIRLPVRAFQKPLAWLISLLRSSKSQEAYRSIGGGSPLRRITEQQARELQSYLRNIGIDATTYVAMRYWHPFTESAVADMKADGVSEVVVLPLYPHFSISTSGSSFRELKRLKDGDDEFAELSIRCIRSWFDHPAYVSSMAELIKKQILACDLPQESHVFFTAHGVPKSYVEEAGDPYQDQIQNCSLLIIDQLENSLGFTNSFSLAYQSRVGPEEWLKPYTEEVLEKLGKSGVKELVVVPISFVSEHIETLQEIDIEYKEIAQKNGIVNFKRVPALDVYPLFIEGLADLVSSCLNGEGISLEEASKLPERVKLYPQEKWQWGWNNSSEVWNGRVAMIVFLSFLMELIIGGGPLHQIGLL.

Fe cation is bound by residues histidine 196 and glutamate 281.

The protein belongs to the ferrochelatase family.

The protein localises to the cytoplasm. The enzyme catalyses heme b + 2 H(+) = protoporphyrin IX + Fe(2+). The protein operates within porphyrin-containing compound metabolism; protoheme biosynthesis; protoheme from protoporphyrin-IX: step 1/1. Catalyzes the ferrous insertion into protoporphyrin IX. This chain is Ferrochelatase, found in Prochlorococcus marinus (strain NATL2A).